Reading from the N-terminus, the 156-residue chain is Ribosomal RNA large subunit methyltransferase H (156 aa).

S-adenosyl-L-methionine contacts are provided by residues L73, G104, and 123–128; that span reads LSALTL.

It belongs to the RNA methyltransferase RlmH family. Homodimer.

The protein localises to the cytoplasm. The enzyme catalyses pseudouridine(1915) in 23S rRNA + S-adenosyl-L-methionine = N(3)-methylpseudouridine(1915) in 23S rRNA + S-adenosyl-L-homocysteine + H(+). Its function is as follows. Specifically methylates the pseudouridine at position 1915 (m3Psi1915) in 23S rRNA. The chain is Ribosomal RNA large subunit methyltransferase H from Shewanella woodyi (strain ATCC 51908 / MS32).